The primary structure comprises 135 residues: Interleukin-4 (135 aa).

Positions 1–24 are cleaved as a signal peptide; it reads MGLTYQLIPVLVCLLVCTSHFAHG. 3 disulfides stabilise this stretch: Cys27/Cys135, Cys48/Cys85, and Cys70/Cys105. Asn62 carries an N-linked (GlcNAc...) asparagine glycan.

This sequence belongs to the IL-4/IL-13 family.

Its subcellular location is the secreted. Functionally, participates in at least several B-cell activation processes as well as of other cell types. It is a costimulator of DNA-synthesis. It induces the expression of class II MHC molecules on resting B-cells. It enhances both secretion and cell surface expression of IgE and IgG1. It also regulates the expression of the low affinity Fc receptor for IgE (CD23) on both lymphocytes and monocytes. Positively regulates IL31RA expression in macrophages. Stimulates autophagy in dendritic cells by interfering with mTORC1 signaling and through the induction of RUFY4. The protein is Interleukin-4 (IL4) of Boselaphus tragocamelus (Nilgai).